Reading from the N-terminus, the 1549-residue chain is Trichohyalin (1549 aa).

The S-100-like stretch occupies residues M1–Q91. EF-hand domains lie at C23–P48 and H49–A84. Positions 27, 32, 62, 64, 66, and 73 each coordinate Ca(2+). Disordered regions lie at residues E97–R125, L157–L180, L262–Q359, and Q404–R448. Composition is skewed to basic and acidic residues over residues L171–L180, L262–Q278, and H317–Q335. Residues E336–E348 are compositionally biased toward low complexity. A compositionally biased stretch (basic and acidic residues) spans D349–Q359. 14 repeat units span residues E413 to R448, E449 to R476, E477 to R504, E505 to R532, E533 to R560, E561 to R588, E589 to R616, E617 to R644, E645 to R678, E679 to R706, E707 to R742, E743 to K771, R772 to R796, and E797 to L832. A 14 X 28 AA approximate tandem repeats region spans residues E413–L832. Disordered stretches follow at residues R782–E803, E839–R942, and Q980–R1000. 3 stretches are compositionally biased toward basic and acidic residues: residues F850–V884, P895–S918, and L925–R942. 23 tandem repeats follow at residues D938–E961, D962–R985, D986–R1021, D1022–R1044, D1045–R1067, D1068–E1090, R1091–R1121, D1122–R1144, D1145–R1167, D1168–R1197, D1198–R1227, D1228–R1250, D1251–R1273, D1274–R1296, D1297–R1319, D1320–R1342, D1343–G1368, V1369–R1391, D1392–Q1416, D1417–Q1439, Q1440–E1461, Q1462–Q1484, and L1485–Q1507. A 23 X 23 AA approximate tandem repeats region spans residues D938–Q1507. Residues Q1489–K1523 are compositionally biased toward basic and acidic residues. Positions Q1489–P1549 are disordered.

The protein belongs to the S100-fused protein family. As to quaternary structure, homodimer. Substrate of transglutaminase. Some 200 arginines are probably converted to citrullines by peptidylarginine deimidase. In terms of tissue distribution, found in the hard keratinizing tissues such as the inner root sheath (IRS) of hair follicles and medulla, and in the epithelia of the tongue, hoof and rumen.

Functionally, intermediate filament-associated protein that associates in regular arrays with keratin intermediate filaments (KIF) of the inner root sheath cells of the hair follicle and the granular layer of the epidermis. It later becomes cross-linked to KIF by isodipeptide bonds. It may serve as scaffold protein, together with involucrin, in the organization of the cell envelope or even anchor the cell envelope to the KIF network. It may be involved in its own calcium-dependent postsynthetic processing during terminal differentiation. This chain is Trichohyalin (TCHH), found in Ovis aries (Sheep).